Here is a 249-residue protein sequence, read N- to C-terminus: Tetraspanin-7 (249 aa).

At 1–16 (MASRRMETKPVITCLK) the chain is on the cytoplasmic side. A helical transmembrane segment spans residues 17-40 (TLLIIYSFVFWITGVILLAVGVWG). Over 41-56 (KLTLGTYISLIAENST) the chain is Extracellular. A glycan (N-linked (GlcNAc...) asparagine) is linked at N54. Residues 57-75 (NAPYVLIGTGTTIVVFGLF) form a helical membrane-spanning segment. The Cytoplasmic portion of the chain corresponds to 76–86 (GCFATCRGSPW). A helical membrane pass occupies residues 87 to 112 (MLKLYAMFLSLVFLAELVAGISGFVF). Residues 113 to 213 (RHEIKDTFLR…LVTSFMETNM (101 aa)) are Extracellular-facing. N155, N158, N177, and N188 each carry an N-linked (GlcNAc...) asparagine glycan. Residues 214-234 (GIIAGVAFGIAFSQLIGMLLA) form a helical membrane-spanning segment. The Cytoplasmic segment spans residues 235–249 (CCLSRFITANQYEMV).

It belongs to the tetraspanin (TM4SF) family.

The protein resides in the membrane. Functionally, may be involved in cell proliferation and cell motility. This Mus musculus (Mouse) protein is Tetraspanin-7 (Tspan7).